The primary structure comprises 278 residues: Protein EXORDIUM-like 4 (278 aa).

The first 23 residues, 1-23, serve as a signal peptide directing secretion; that stretch reads MAYNYRFAILLVLLSATVGFTAA. Asn-35 is a glycosylation site (N-linked (GlcNAc...) asparagine).

The protein belongs to the EXORDIUM family.

Its subcellular location is the secreted. The protein resides in the extracellular space. It localises to the apoplast. Its function is as follows. May play a role in a brassinosteroid-dependent regulation of growth and development. In Arabidopsis thaliana (Mouse-ear cress), this protein is Protein EXORDIUM-like 4 (EXL4).